The chain runs to 178 residues: Phosphopantetheine adenylyltransferase (178 aa).

Thr17 contributes to the substrate binding site. Residues 17–18 (TF) and His25 each bind ATP. The substrate site is built by Lys49, Leu86, and Arg100. ATP-binding positions include 101–103 (GLR), Glu111, and 136–142 (LQPVASR).

The protein belongs to the bacterial CoaD family. Homohexamer. Mg(2+) serves as cofactor.

The protein localises to the cytoplasm. The catalysed reaction is (R)-4'-phosphopantetheine + ATP + H(+) = 3'-dephospho-CoA + diphosphate. It participates in cofactor biosynthesis; coenzyme A biosynthesis; CoA from (R)-pantothenate: step 4/5. Functionally, reversibly transfers an adenylyl group from ATP to 4'-phosphopantetheine, yielding dephospho-CoA (dPCoA) and pyrophosphate. This is Phosphopantetheine adenylyltransferase from Zymomonas mobilis subsp. mobilis (strain ATCC 31821 / ZM4 / CP4).